The sequence spans 222 residues: Cytolethal distending toxin subunit A (222 aa).

An N-terminal signal peptide occupies residues 1-15 (MKKFLPGLLLMGLVA). A lipid anchor (N-palmitoyl cysteine) is attached at Cys-16. A lipid anchor (S-diacylglycerol cysteine) is attached at Cys-16. Residues 22-44 (MSDYSQPESQSDLAPKSSTTQFQ) are disordered. The segment at 90–101 (WALAKRNWLWAY) is mediates binding to target cells. The Ricin B-type lectin domain maps to 122 to 211 (HREYFRFVNQ…EPLRDQTWYL (90 aa)).

As to quaternary structure, heterotrimer of 3 subunits, CdtA, CdtB and CdtC. May form higher oligomers.

The protein resides in the cell outer membrane. In terms of biological role, CDTs are cytotoxins which induce host cell distension, growth arrest in G2/M phase, nucleus swelling, and chromatin fragmentation in HeLa cells. The polypeptide is Cytolethal distending toxin subunit A (cdtA) (Aggregatibacter actinomycetemcomitans (Actinobacillus actinomycetemcomitans)).